Consider the following 598-residue polypeptide: Aspartate--tRNA(Asp/Asn) ligase (598 aa).

Glu174 lines the L-aspartate pocket. The interval 198-201 (QQLK) is aspartate. L-aspartate is bound at residue Arg220. ATP is bound by residues 220 to 222 (RDE) and Gln229. His458 contributes to the L-aspartate binding site. Glu492 contacts ATP. Arg499 contributes to the L-aspartate binding site. 544 to 547 (GIDR) contacts ATP.

This sequence belongs to the class-II aminoacyl-tRNA synthetase family. Type 1 subfamily. In terms of assembly, homodimer.

It localises to the cytoplasm. The enzyme catalyses tRNA(Asx) + L-aspartate + ATP = L-aspartyl-tRNA(Asx) + AMP + diphosphate. Its function is as follows. Aspartyl-tRNA synthetase with relaxed tRNA specificity since it is able to aspartylate not only its cognate tRNA(Asp) but also tRNA(Asn). Reaction proceeds in two steps: L-aspartate is first activated by ATP to form Asp-AMP and then transferred to the acceptor end of tRNA(Asp/Asn). The sequence is that of Aspartate--tRNA(Asp/Asn) ligase from Dehalococcoides mccartyi (strain ATCC BAA-2100 / JCM 16839 / KCTC 5957 / BAV1).